A 279-amino-acid chain; its full sequence is Movement protein (279 aa).

The disordered stretch occupies residues 246–279 (SESEELNVESPPAAIGSSSASRSEAFRPQVVNGL). A compositionally biased stretch (low complexity) spans 254–268 (ESPPAAIGSSSASRS).

Belongs to the cucumovirus movement protein family.

The protein localises to the host cell junction. Its subcellular location is the host plasmodesma. In terms of biological role, transports viral genome to neighboring plant cells directly through plasmosdesmata, without any budding. The movement protein allows efficient cell to cell propagation, by bypassing the host cell wall barrier. Acts by forming a tubular structure at the host plasmodesmata, enlarging it enough to allow free passage of virion capsids. This is Movement protein from Cucumber mosaic virus (strain O) (CMV).